We begin with the raw amino-acid sequence, 310 residues long: GPN-loop GTPase 2 (310 aa).

Alanine 2 bears the N-acetylalanine mark. 19-24 (GSGKTT) lines the GTP pocket. The short motif at 76-78 (GPN) is the Gly-Pro-Asn (GPN)-loop; involved in dimer interface element. Position 178–181 (178–181 (SKMD)) interacts with GTP.

Belongs to the GPN-loop GTPase family. In terms of assembly, heterodimers with GPN1 or GPN3. Binds to RNA polymerase II (RNAPII).

Its function is as follows. Small GTPase required for proper localization of RNA polymerase II and III (RNAPII and RNAPIII). May act at an RNAP assembly step prior to nuclear import. The protein is GPN-loop GTPase 2 of Mus musculus (Mouse).